Here is a 124-residue protein sequence, read N- to C-terminus: MCAVSLTKPVAVVALGGALGASARFLLAELWPGIWTVLLINVVGSLLLGYLAETVGPDRLSRLFLGVGVLGGFTTFSTFAVDAVREDAVTATLYVVATLIPALLAARLGMLAGHRHRLARKAVA.

4 consecutive transmembrane segments (helical) span residues 1-21 (MCAV…ALGA), 30-50 (LWPG…LLGY), 64-84 (FLGV…VDAV), and 93-113 (LYVV…MLAG). Na(+)-binding residues include Gly71 and Thr74.

The protein belongs to the fluoride channel Fluc/FEX (TC 1.A.43) family.

Its subcellular location is the cell membrane. It carries out the reaction fluoride(in) = fluoride(out). Its activity is regulated as follows. Na(+) is not transported, but it plays an essential structural role and its presence is essential for fluoride channel function. In terms of biological role, fluoride-specific ion channel. Important for reducing fluoride concentration in the cell, thus reducing its toxicity. This chain is Fluoride-specific ion channel FluC 1, found in Rhodococcus jostii (strain RHA1).